The following is a 74-amino-acid chain: Sodium channel neurotoxin MeuNaTxalpha-6 (74 aa).

The signal sequence occupies residues 1-7 (LMTGVES). The LCN-type CS-alpha/beta domain occupies 9–73 (RDAYIAKPHN…VPIRIPGKCH (65 aa)). 4 disulfide bridges follow: C19/C72, C23/C45, C31/C55, and C35/C57. A propeptide (removed by a carboxypeptidase) is located at residue R74.

It belongs to the long (4 C-C) scorpion toxin superfamily. Sodium channel inhibitor family. Alpha subfamily. Expressed by the venom gland.

It is found in the secreted. Alpha toxins bind voltage-independently at site-3 of sodium channels (Nav) and inhibit the inactivation of the activated channels, thereby blocking neuronal transmission. This chain is Sodium channel neurotoxin MeuNaTxalpha-6, found in Mesobuthus eupeus (Lesser Asian scorpion).